Consider the following 893-residue polypeptide: Protein kintoun (893 aa).

5 disordered regions span residues 211-243 (KNAT…VLPM), 372-395 (LSRE…EEAG), 587-719 (EQVH…SIDD), 781-821 (QRKK…QQTA), and 834-893 (PQNN…DEDM). Residues 214 to 232 (TAEEREPHPLEHTYPKKPE) show a composition bias toward basic and acidic residues. Residue Ser-377 is modified to Phosphoserine. A compositionally biased stretch (acidic residues) spans 594 to 603 (QQEEEEEEEQ). Basic residues predominate over residues 609 to 626 (HQHKKGNKKQRKRNKKQR). The span at 640–651 (QQQQHQKQQQQQ) shows a compositional bias: low complexity. Composition is skewed to polar residues over residues 656-667 (ENSSPESLNAGS) and 684-694 (FSECNDSSSVQ). A compositionally biased stretch (low complexity) spans 709–719 (SISESSSSIDD). Residues 781-797 (QRKKNQKRRDCKLRAQQ) are compositionally biased toward basic residues. Ser-801 bears the Phosphoserine mark. Positions 836–848 (NNNNRSYSKNNKN) are enriched in low complexity. Over residues 865–877 (NNEEDTKRNEADA) the composition is skewed to basic and acidic residues. Over residues 884–893 (EMDDDDDEDM) the composition is skewed to acidic residues.

This sequence belongs to the PIH1 family. Kintoun subfamily. As to quaternary structure, interacts with Pp1alpha-96A, Pp1-87B, Pp1-13C and flw.

Its subcellular location is the cytoplasm. In terms of biological role, required for cytoplasmic pre-assembly of axonemal dyneins, thereby playing a central role in motility in cilia and flagella. Involved in pre-assembly of dynein arm complexes in the cytoplasm before intraflagellar transport loads them for the ciliary compartment. The chain is Protein kintoun from Drosophila grimshawi (Hawaiian fruit fly).